Consider the following 59-residue polypeptide: Small, acid-soluble spore protein H 2 (59 aa).

Belongs to the SspH family.

It is found in the spore core. The sequence is that of Small, acid-soluble spore protein H 2 from Geobacillus kaustophilus (strain HTA426).